Consider the following 148-residue polypeptide: Cdc42 effector protein 5 (148 aa).

2 disordered regions span residues 1–89 (MPVL…DPLL) and 111–148 (RPEAAAAKPDAEPRPGTQPPQARCRPNADLELNDVIGL). A CRIB domain is found at 23 to 37 (ISAPLGDFRHTLHVG). At Arg-38 the chain carries Omega-N-methylarginine. Pro residues predominate over residues 55-76 (GPPPEPRAPPAGAPRSPPPPAV). A compositionally biased stretch (low complexity) spans 77-87 (PQSAAPSPADP).

Belongs to the BORG/CEP family. Interacts with CDC42, in a GTP-dependent manner, and with SEPT7.

It localises to the endomembrane system. Its subcellular location is the cytoplasm. The protein localises to the cytoskeleton. Probably involved in the organization of the actin cytoskeleton. May act downstream of CDC42 to induce actin filament assembly leading to cell shape changes. Induces pseudopodia formation in fibroblasts. Inhibits MAPK8 independently of CDC42 binding. Controls septin organization and this effect is negatively regulated by CDC42. This is Cdc42 effector protein 5 (CDC42EP5) from Homo sapiens (Human).